Here is a 700-residue protein sequence, read N- to C-terminus: Translation initiation factor IF-2 (700 aa).

The disordered stretch occupies residues 58 to 85 (KKEVKKQKEPSKEKGKSSEQVKVKEKSK). The region spanning 191 to 365 (PRPPVVTIMG…EMQEIRCIPD (175 aa)) is the tr-type G domain. The G1 stretch occupies residues 200 to 207 (GHVDHGKT). 200–207 (GHVDHGKT) serves as a coordination point for GTP. The segment at 225–229 (GITQS) is G2. The tract at residues 246-249 (DTPG) is G3. GTP is bound by residues 246–250 (DTPGH) and 300–303 (NKID). The G4 stretch occupies residues 300-303 (NKID). The tract at residues 337–339 (SAK) is G5.

This sequence belongs to the TRAFAC class translation factor GTPase superfamily. Classic translation factor GTPase family. IF-2 subfamily.

It is found in the cytoplasm. Its function is as follows. One of the essential components for the initiation of protein synthesis. Protects formylmethionyl-tRNA from spontaneous hydrolysis and promotes its binding to the 30S ribosomal subunits. Also involved in the hydrolysis of GTP during the formation of the 70S ribosomal complex. The protein is Translation initiation factor IF-2 of Petrotoga mobilis (strain DSM 10674 / SJ95).